Consider the following 511-residue polypeptide: Potassium voltage-gated channel subfamily A member 10 (511 aa).

Residues 25 to 44 form a disordered region; that stretch reads EPGYATDFDPTSSKGRPGSS. A helical transmembrane segment spans residues 218–238; sequence VAVVSVLVVVISITIFCLETL. The helical transmembrane segment at 271–292 threads the bilayer; sequence FFMVESTCIVWFTFELVLRFVV. Cys293 is lipidated: S-palmitoyl cysteine. A helical transmembrane segment spans residues 303–323; sequence IMNIIDIISIIPYFATLITEL. Residues 339–358 traverse the membrane as a helical; Voltage-sensor segment; sequence ILRIIRLVRVFRIFKLSRHS. Residues 375–395 form a helical membrane-spanning segment; that stretch reads LGLLIFFLFIGVILFSSAVYF. Residues 421–426 carry the Selectivity filter motif; sequence TVGYGD. The chain crosses the membrane as a helical span at residues 436 to 456; that stretch reads IVGTLCAIAGVLTIALPVPVI. A disordered region spans residues 489–511; it reads SRMGSTESLNKTNGSCSAEKSRK.

This sequence belongs to the potassium channel family. A (Shaker) (TC 1.A.1.2) subfamily. Kv1.8/KCNA10 sub-subfamily. Homotetramer. Interacts with KCN4B/POMP. Interaction with KCN4B/POMP is necessary for the modulation of channel activity by cAMP. Expressed strongly in the inner ear and weakly in skeletal muscle. Not detected in other tissues.

Its subcellular location is the membrane. The enzyme catalyses K(+)(in) = K(+)(out). Its activity is regulated as follows. The channel activity is up-regulated by cAMP. Its function is as follows. Voltage-gated potassium ion channel that mediates K(+) permeability of excitable membranes. When opened in response to the voltage difference across the membrane, KCNA10 channel selectively allows the flow of potassium ions across the membrane down their electrochemical gradient. In Mus musculus (Mouse), this protein is Potassium voltage-gated channel subfamily A member 10.